We begin with the raw amino-acid sequence, 127 residues long: UPF0325 protein VP2321 (127 aa).

The protein belongs to the UPF0325 family.

The chain is UPF0325 protein VP2321 from Vibrio parahaemolyticus serotype O3:K6 (strain RIMD 2210633).